The primary structure comprises 257 residues: Phosphonates import ATP-binding protein PhnC (257 aa).

One can recognise an ABC transporter domain in the interval 2–246 (IEFRNVSKVY…KFAEIYGDVA (245 aa)). 35–42 (GLSGAGKS) is an ATP binding site.

Belongs to the ABC transporter superfamily. Phosphonates importer (TC 3.A.1.9.1) family. The complex is composed of two ATP-binding proteins (PhnC), two transmembrane proteins (PhnE) and a solute-binding protein (PhnD).

The protein localises to the cell membrane. It catalyses the reaction phosphonate(out) + ATP + H2O = phosphonate(in) + ADP + phosphate + H(+). Functionally, part of the ABC transporter complex PhnCDE involved in phosphonates import. Responsible for energy coupling to the transport system. This is Phosphonates import ATP-binding protein PhnC from Bacillus cereus (strain ATCC 10987 / NRS 248).